The sequence spans 70 residues: Small ribosomal subunit protein bS21 (70 aa).

This sequence belongs to the bacterial ribosomal protein bS21 family.

The protein is Small ribosomal subunit protein bS21 of Campylobacter fetus subsp. fetus (strain 82-40).